The chain runs to 460 residues: Cysteine--tRNA ligase (460 aa).

Cysteine 28 serves as a coordination point for Zn(2+). The short motif at 30 to 40 (VTIYDLCHIGH) is the 'HIGH' region element. Residues cysteine 209, histidine 234, and glutamate 238 each contribute to the Zn(2+) site. The 'KMSKS' region motif lies at 266-270 (KMSKS). Residue lysine 269 participates in ATP binding.

Belongs to the class-I aminoacyl-tRNA synthetase family. As to quaternary structure, monomer. It depends on Zn(2+) as a cofactor.

It localises to the cytoplasm. The catalysed reaction is tRNA(Cys) + L-cysteine + ATP = L-cysteinyl-tRNA(Cys) + AMP + diphosphate. The polypeptide is Cysteine--tRNA ligase (Vibrio vulnificus (strain CMCP6)).